A 99-amino-acid polypeptide reads, in one-letter code: Integration host factor subunit alpha (99 aa).

Residues 49-70 are disordered; that stretch reads FGNFDLRDKNQRPGRNPKTGED.

It belongs to the bacterial histone-like protein family. In terms of assembly, heterodimer of an alpha and a beta chain.

This protein is one of the two subunits of integration host factor, a specific DNA-binding protein that functions in genetic recombination as well as in transcriptional and translational control. The polypeptide is Integration host factor subunit alpha (Cronobacter sakazakii (strain ATCC BAA-894) (Enterobacter sakazakii)).